The sequence spans 784 residues: Repetin (784 aa).

The interval 1 to 91 (MAQLLNSILS…VQACYHKLDN (91 aa)) is S-100-like. 2 EF-hand domains span residues 13-48 (DVFH…LQRP) and 49-84 (NDPE…LVQA). Ca(2+) contacts are provided by glutamate 32, aspartate 62, aspartate 64, aspartate 66, histidine 68, and glutamate 73. Disordered regions lie at residues 92–221 (KSHG…QAKW), 282–584 (GCGQ…SHYI), 601–661 (TEGT…HQHK), and 677–784 (RDWQ…NHQR). Basic and acidic residues predominate over residues 124 to 201 (RHEEERQNSH…FSFDQSERQS (78 aa)). Composition is skewed to polar residues over residues 286–296 (TDRQGQSSHYG), 304–343 (SYHY…SSHY), 356–392 (DQTN…SHYG), 400–486 (SSHY…QSSH), 504–584 (GQGQ…SHYI), 610–646 (VEQS…QNGH), and 680–695 (QSCS…QTRQ). Basic and acidic residues-rich tracts occupy residues 704 to 722 (WAEE…HESQ) and 729 to 784 (QDRR…NHQR).

It belongs to the S100-fused protein family. In terms of processing, potential substrate of transglutaminase. Some arginines are probably converted to citrullines by peptidylarginine deimidase. As to expression, expression is scattered in the normal epidermis but strong in the acrosyringium, the inner hair root sheath and in the filiform papilli of the tongue.

The protein localises to the secreted. Its subcellular location is the extracellular space. It is found in the extracellular matrix. Its function is as follows. Involved in the cornified cell envelope formation. Multifunctional epidermal matrix protein. Reversibly binds calcium. The polypeptide is Repetin (RPTN) (Homo sapiens (Human)).